Reading from the N-terminus, the 300-residue chain is Porphobilinogen deaminase (300 aa).

S-(dipyrrolylmethanemethyl)cysteine is present on cysteine 242.

Belongs to the HMBS family. As to quaternary structure, monomer. It depends on dipyrromethane as a cofactor.

The enzyme catalyses 4 porphobilinogen + H2O = hydroxymethylbilane + 4 NH4(+). It participates in porphyrin-containing compound metabolism; protoporphyrin-IX biosynthesis; coproporphyrinogen-III from 5-aminolevulinate: step 2/4. Its function is as follows. Tetrapolymerization of the monopyrrole PBG into the hydroxymethylbilane pre-uroporphyrinogen in several discrete steps. In Blochmanniella pennsylvanica (strain BPEN), this protein is Porphobilinogen deaminase.